Consider the following 393-residue polypeptide: Riboflavin biosynthesis protein RibBA (393 aa).

Residues 1-200 (MQFDTIELAI…IKSLVAFRKA (200 aa)) form a DHBP synthase region. D-ribulose 5-phosphate-binding positions include 27–28 (RE), aspartate 32, 139–143 (RNGHT), and glutamate 163. Mg(2+) is bound at residue glutamate 28. Position 142 (histidine 142) interacts with Mg(2+). The interval 201 to 393 (VELNVNLKAK…TKKNKMGHLI (193 aa)) is GTP cyclohydrolase II. 249–253 (RMHSA) is a GTP binding site. Zn(2+) is bound by residues cysteine 254, cysteine 265, and cysteine 267. GTP-binding positions include glutamine 270, 291–293 (EGR), and threonine 313. Aspartate 325 acts as the Proton acceptor; for GTP cyclohydrolase activity in catalysis. The active-site Nucleophile; for GTP cyclohydrolase activity is arginine 327. GTP is bound by residues serine 348 and lysine 353.

It in the N-terminal section; belongs to the DHBP synthase family. The protein in the C-terminal section; belongs to the GTP cyclohydrolase II family. It depends on Mg(2+) as a cofactor. The cofactor is Mn(2+). Zn(2+) serves as cofactor.

The enzyme catalyses D-ribulose 5-phosphate = (2S)-2-hydroxy-3-oxobutyl phosphate + formate + H(+). The catalysed reaction is GTP + 4 H2O = 2,5-diamino-6-hydroxy-4-(5-phosphoribosylamino)-pyrimidine + formate + 2 phosphate + 3 H(+). Its pathway is cofactor biosynthesis; riboflavin biosynthesis; 2-hydroxy-3-oxobutyl phosphate from D-ribulose 5-phosphate: step 1/1. The protein operates within cofactor biosynthesis; riboflavin biosynthesis; 5-amino-6-(D-ribitylamino)uracil from GTP: step 1/4. Its function is as follows. Catalyzes the conversion of D-ribulose 5-phosphate to formate and 3,4-dihydroxy-2-butanone 4-phosphate. Functionally, catalyzes the conversion of GTP to 2,5-diamino-6-ribosylamino-4(3H)-pyrimidinone 5'-phosphate (DARP), formate and pyrophosphate. In Staphylococcus epidermidis (strain ATCC 35984 / DSM 28319 / BCRC 17069 / CCUG 31568 / BM 3577 / RP62A), this protein is Riboflavin biosynthesis protein RibBA.